Reading from the N-terminus, the 185-residue chain is Threonylcarbamoyl-AMP synthase (185 aa).

Residues Met1–Gly185 enclose the YrdC-like domain. Residues Glu163–Gly185 form a disordered region. Residues Thr164 to Lys177 show a composition bias toward basic and acidic residues.

Belongs to the SUA5 family. TsaC subfamily.

It is found in the cytoplasm. The enzyme catalyses L-threonine + hydrogencarbonate + ATP = L-threonylcarbamoyladenylate + diphosphate + H2O. Functionally, required for the formation of a threonylcarbamoyl group on adenosine at position 37 (t(6)A37) in tRNAs that read codons beginning with adenine. Catalyzes the conversion of L-threonine, HCO(3)(-)/CO(2) and ATP to give threonylcarbamoyl-AMP (TC-AMP) as the acyladenylate intermediate, with the release of diphosphate. The sequence is that of Threonylcarbamoyl-AMP synthase from Vibrio parahaemolyticus serotype O3:K6 (strain RIMD 2210633).